The following is a 332-amino-acid chain: Malate dehydrogenase, cytoplasmic (332 aa).

NAD(+) is bound by residues 16–17, D43, and G90; that span reads QI. Residue R99 participates in oxaloacetate binding. Q113 and N132 together coordinate NAD(+). Positions 132, 163, 188, and 243 each coordinate oxaloacetate. Residue H188 is the Proton acceptor of the active site.

The protein belongs to the LDH/MDH superfamily. MDH type 2 family. In terms of assembly, homodimer.

It is found in the cytoplasm. It carries out the reaction (S)-malate + NAD(+) = oxaloacetate + NADH + H(+). The sequence is that of Malate dehydrogenase, cytoplasmic (NR1) from Beta vulgaris (Sugar beet).